A 144-amino-acid polypeptide reads, in one-letter code: Transcriptional regulator SlyA (144 aa).

Residues 2-135 form the HTH marR-type domain; the sequence is ESPLGSDLAR…LIKLVAKLEH (134 aa). Positions 49 to 72 form a DNA-binding region, H-T-H motif; it reads QIQLAKAIGIEQPSLVRTLDQLED.

Belongs to the SlyA family. In terms of assembly, homodimer.

Its function is as follows. Transcription regulator that can specifically activate or repress expression of target genes. Required to activate expression of virulent genes. The sequence is that of Transcriptional regulator SlyA from Salmonella choleraesuis (strain SC-B67).